Here is a 348-residue protein sequence, read N- to C-terminus: Probable dual-specificity RNA methyltransferase RlmN (348 aa).

Glu-93 acts as the Proton acceptor in catalysis. The Radical SAM core domain occupies 99–333 (TEKRLTACLS…VSLRKSRGLD (235 aa)). Cys-106 and Cys-338 are oxidised to a cystine. 3 residues coordinate [4Fe-4S] cluster: Cys-113, Cys-117, and Cys-120. Residues 160–161 (GE), Ser-190, 219–221 (SLH), and Asn-295 each bind S-adenosyl-L-methionine. Cys-338 serves as the catalytic S-methylcysteine intermediate.

Belongs to the radical SAM superfamily. RlmN family. Requires [4Fe-4S] cluster as cofactor.

It localises to the cytoplasm. It carries out the reaction adenosine(2503) in 23S rRNA + 2 reduced [2Fe-2S]-[ferredoxin] + 2 S-adenosyl-L-methionine = 2-methyladenosine(2503) in 23S rRNA + 5'-deoxyadenosine + L-methionine + 2 oxidized [2Fe-2S]-[ferredoxin] + S-adenosyl-L-homocysteine. The enzyme catalyses adenosine(37) in tRNA + 2 reduced [2Fe-2S]-[ferredoxin] + 2 S-adenosyl-L-methionine = 2-methyladenosine(37) in tRNA + 5'-deoxyadenosine + L-methionine + 2 oxidized [2Fe-2S]-[ferredoxin] + S-adenosyl-L-homocysteine. Specifically methylates position 2 of adenine 2503 in 23S rRNA and position 2 of adenine 37 in tRNAs. This is Probable dual-specificity RNA methyltransferase RlmN from Prochlorococcus marinus (strain MIT 9215).